A 400-amino-acid polypeptide reads, in one-letter code: Acetate kinase (400 aa).

Asparagine 9 contributes to the Mg(2+) binding site. Lysine 16 contacts ATP. Arginine 90 lines the substrate pocket. The active-site Proton donor/acceptor is the aspartate 147. Residues 207–211, 282–284, and 330–334 contribute to the ATP site; these read HIGNG, DLR, and GIGEN. Glutamate 385 contacts Mg(2+).

It belongs to the acetokinase family. In terms of assembly, homodimer. Mg(2+) serves as cofactor. The cofactor is Mn(2+).

It localises to the cytoplasm. It carries out the reaction acetate + ATP = acetyl phosphate + ADP. It functions in the pathway metabolic intermediate biosynthesis; acetyl-CoA biosynthesis; acetyl-CoA from acetate: step 1/2. Functionally, catalyzes the formation of acetyl phosphate from acetate and ATP. Can also catalyze the reverse reaction. In Staphylococcus aureus (strain JH1), this protein is Acetate kinase.